The chain runs to 350 residues: Biotin synthase (350 aa).

In terms of domain architecture, Radical SAM core spans 54–278 (REIQLSTLLS…TMPQSYVRLS (225 aa)). Residues Cys69, Cys73, and Cys76 each contribute to the [4Fe-4S] cluster site. [2Fe-2S] cluster-binding residues include Cys113, Cys144, Cys204, and Arg276.

This sequence belongs to the radical SAM superfamily. Biotin synthase family. As to quaternary structure, homodimer. [4Fe-4S] cluster is required as a cofactor. It depends on [2Fe-2S] cluster as a cofactor.

It catalyses the reaction (4R,5S)-dethiobiotin + (sulfur carrier)-SH + 2 reduced [2Fe-2S]-[ferredoxin] + 2 S-adenosyl-L-methionine = (sulfur carrier)-H + biotin + 2 5'-deoxyadenosine + 2 L-methionine + 2 oxidized [2Fe-2S]-[ferredoxin]. It functions in the pathway cofactor biosynthesis; biotin biosynthesis; biotin from 7,8-diaminononanoate: step 2/2. Catalyzes the conversion of dethiobiotin (DTB) to biotin by the insertion of a sulfur atom into dethiobiotin via a radical-based mechanism. The sequence is that of Biotin synthase from Neisseria meningitidis serogroup B (strain ATCC BAA-335 / MC58).